The following is a 220-amino-acid chain: Putative GED domain-containing protein DNM1P46 (220 aa).

The tract at residues 18–46 (VSVETRNVKPQGKDSKAEENGSHSFMHSM) is disordered. Over residues 28–38 (QGKDSKAEENG) the composition is skewed to basic and acidic residues. A GED domain is found at 54 to 149 (METTQNLVDS…CCPTCTRLGT (96 aa)). The interval 173-194 (DTPGGVGRAGTAARRDSRGNEK) is disordered. Positions 185–194 (ARRDSRGNEK) are enriched in basic and acidic residues.

This chain is Putative GED domain-containing protein DNM1P46 (DNM1P46), found in Homo sapiens (Human).